Reading from the N-terminus, the 82-residue chain is Transcription elongation factor 1 homolog (82 aa).

Positions 26, 29, 50, and 53 each coordinate Zn(2+).

It belongs to the ELOF1 family.

The protein resides in the nucleus. In terms of biological role, transcription elongation factor implicated in the maintenance of proper chromatin structure in actively transcribed regions. In Drosophila melanogaster (Fruit fly), this protein is Transcription elongation factor 1 homolog.